Consider the following 506-residue polypeptide: Anaerobic nitric oxide reductase transcription regulator NorR (506 aa).

Position 57 is a 4-aspartylphosphate (D57). One can recognise a Sigma-54 factor interaction domain in the interval 187–416 (MIGLSPAMTQ…LEHAIHRAVV (230 aa)). ATP contacts are provided by residues 215-222 (GETGTGKE) and 278-287 (ADNGTLFLDE). Residues 481-500 (WAASARALETDVANLHRLAK) constitute a DNA-binding region (H-T-H motif).

Its pathway is nitrogen metabolism; nitric oxide reduction. Functionally, required for the expression of anaerobic nitric oxide (NO) reductase, acts as a transcriptional activator for at least the norVW operon. Activation also requires sigma-54. The sequence is that of Anaerobic nitric oxide reductase transcription regulator NorR from Salmonella arizonae (strain ATCC BAA-731 / CDC346-86 / RSK2980).